A 785-amino-acid chain; its full sequence is Endonuclease MutS2 (785 aa).

335 to 342 is a binding site for ATP; that stretch reads GPNTGGKT. Residues 710-785 form the Smr domain; the sequence is LDLRGERYED…GNGVTIVEFK (76 aa).

The protein belongs to the DNA mismatch repair MutS family. MutS2 subfamily. As to quaternary structure, homodimer. Binds to stalled ribosomes, contacting rRNA.

Its function is as follows. Endonuclease that is involved in the suppression of homologous recombination and thus may have a key role in the control of bacterial genetic diversity. Acts as a ribosome collision sensor, splitting the ribosome into its 2 subunits. Detects stalled/collided 70S ribosomes which it binds and splits by an ATP-hydrolysis driven conformational change. Acts upstream of the ribosome quality control system (RQC), a ribosome-associated complex that mediates the extraction of incompletely synthesized nascent chains from stalled ribosomes and their subsequent degradation. Probably generates substrates for RQC. The chain is Endonuclease MutS2 from Listeria monocytogenes serovar 1/2a (strain ATCC BAA-679 / EGD-e).